A 399-amino-acid polypeptide reads, in one-letter code: MSQPVAITDGIYWVGAVDWNIRYFHGPAFSTHRGTTYNAYLIVDDKTALVDTVYEPFKEELIAKLKQIKDPVKLDYLVVNHTESDHAGAFPAIMELCPDAHVLCTQRAFDSLKAHYSHIDFNYTIVKTGTSVSLGKRSLTFIEAPMLHWPDSMFTYVPEEALLLPNDAFGQHIATSVRFDDQVDAGLIMDEAAKYYANILMPFSNLITKKLDEIQKINLAIKTIAPSHGIIWRKDPGRIIEAYARWAEGQGKAKAVIAYDTMWLSTEKMAHALMDGLVAGGCEVKLFKLSVSDRNDVIKEILDARAVLVGSPTINNDILPVVSPLLDDLVGLRPKNKVGLAFGAYGWGGGAQKILEERLKAAKIELIAEPGPTVQWVPRGEDLQRCYELGRKIAARIAD.

A zinc metallo-hydrolase region spans residues 32–221; that stretch reads HRGTTYNAYL…DEIQKINLAI (190 aa). 6 residues coordinate Fe cation: H81, E83, D85, H148, D167, and H228. In terms of domain architecture, Flavodoxin-like spans 255-394; it reads AVIAYDTMWL…RCYELGRKIA (140 aa).

The protein in the N-terminal section; belongs to the zinc metallo-hydrolase group 3 family. In terms of assembly, homodimer. It depends on FMN as a cofactor. Fe cation is required as a cofactor.

Its function is as follows. Has nitric oxide reductase activity in combination with Hrb; probably involved in nitrosative stress protection. The polypeptide is Nitric oxide reductase (fprA) (Moorella thermoacetica (strain ATCC 39073 / JCM 9320)).